A 746-amino-acid polypeptide reads, in one-letter code: Eukaryotic translation initiation factor 3 subunit B (746 aa).

Residues 1–11 (MAPSYEHLREA) are compositionally biased toward basic and acidic residues. Residues 1–20 (MAPSYEHLREADLDEDEFDE) are disordered. One can recognise an RRM domain in the interval 42–128 (TFVVIDGLPE…HTLRVNKLMD (87 aa)). 7 WD repeats span residues 195 to 234 (DRPN…RLGR), 247 to 294 (PQEN…RSFA), 307 to 346 (PRKH…LLDK), 349 to 386 (IKVE…IGSN), 458 to 500 (TIKD…FFCP), 517 to 560 (LDKR…EKPE), and 575 to 620 (ADHY…LREE).

This sequence belongs to the eIF-3 subunit B family. Component of the eukaryotic translation initiation factor 3 (eIF-3) complex.

It is found in the cytoplasm. In terms of biological role, RNA-binding component of the eukaryotic translation initiation factor 3 (eIF-3) complex, which is involved in protein synthesis of a specialized repertoire of mRNAs and, together with other initiation factors, stimulates binding of mRNA and methionyl-tRNAi to the 40S ribosome. The eIF-3 complex specifically targets and initiates translation of a subset of mRNAs involved in cell proliferation. The protein is Eukaryotic translation initiation factor 3 subunit B of Pyricularia oryzae (strain 70-15 / ATCC MYA-4617 / FGSC 8958) (Rice blast fungus).